The primary structure comprises 213 residues: Leucyl/phenylalanyl-tRNA--protein transferase (213 aa).

The protein belongs to the L/F-transferase family.

It is found in the cytoplasm. It catalyses the reaction N-terminal L-lysyl-[protein] + L-leucyl-tRNA(Leu) = N-terminal L-leucyl-L-lysyl-[protein] + tRNA(Leu) + H(+). The enzyme catalyses N-terminal L-arginyl-[protein] + L-leucyl-tRNA(Leu) = N-terminal L-leucyl-L-arginyl-[protein] + tRNA(Leu) + H(+). It carries out the reaction L-phenylalanyl-tRNA(Phe) + an N-terminal L-alpha-aminoacyl-[protein] = an N-terminal L-phenylalanyl-L-alpha-aminoacyl-[protein] + tRNA(Phe). Functions in the N-end rule pathway of protein degradation where it conjugates Leu, Phe and, less efficiently, Met from aminoacyl-tRNAs to the N-termini of proteins containing an N-terminal arginine or lysine. This Campylobacter lari (strain RM2100 / D67 / ATCC BAA-1060) protein is Leucyl/phenylalanyl-tRNA--protein transferase.